Consider the following 214-residue polypeptide: Transcriptional regulatory protein MctR (214 aa).

Residues 8 to 124 (RVLLIDNHPL…EIVSAIETVA (117 aa)) enclose the Response regulatory domain. Residue Asp59 is modified to 4-aspartylphosphate. The region spanning 143-208 (VEEGSDPLTP…GLIRYALDHG (66 aa)) is the HTH luxR-type domain. Positions 167-186 (NKEIAETLGITSATAETHRK) form a DNA-binding region, H-T-H motif.

The protein localises to the cytoplasm. Member of the two-component regulatory system MctS/MctR, which activates mctP expression. The chain is Transcriptional regulatory protein MctR from Rhizobium johnstonii (strain DSM 114642 / LMG 32736 / 3841) (Rhizobium leguminosarum bv. viciae).